We begin with the raw amino-acid sequence, 156 residues long: Small ribosomal subunit protein uS7 (156 aa).

The protein belongs to the universal ribosomal protein uS7 family. As to quaternary structure, part of the 30S ribosomal subunit. Contacts proteins S9 and S11.

Functionally, one of the primary rRNA binding proteins, it binds directly to 16S rRNA where it nucleates assembly of the head domain of the 30S subunit. Is located at the subunit interface close to the decoding center, probably blocks exit of the E-site tRNA. This Arthrospira platensis (Spirulina platensis) protein is Small ribosomal subunit protein uS7.